The following is a 265-amino-acid chain: Putative hydro-lyase Teth514_1597 (265 aa).

This sequence belongs to the D-glutamate cyclase family.

The chain is Putative hydro-lyase Teth514_1597 from Thermoanaerobacter sp. (strain X514).